The primary structure comprises 122 residues: Large ribosomal subunit protein eL34 (122 aa).

This sequence belongs to the eukaryotic ribosomal protein eL34 family. Component of the large ribosomal subunit. Mature ribosomes consist of a small (40S) and a large (60S) subunit. The 40S subunit contains about 32 different proteins and 1 molecule of RNA (18S). The 60S subunit contains 45 different proteins and 3 molecules of RNA (25S, 5.8S and 5S).

It is found in the cytoplasm. Its function is as follows. Component of the ribosome, a large ribonucleoprotein complex responsible for the synthesis of proteins in the cell. The small ribosomal subunit (SSU) binds messenger RNAs (mRNAs) and translates the encoded message by selecting cognate aminoacyl-transfer RNA (tRNA) molecules. The large subunit (LSU) contains the ribosomal catalytic site termed the peptidyl transferase center (PTC), which catalyzes the formation of peptide bonds, thereby polymerizing the amino acids delivered by tRNAs into a polypeptide chain. The nascent polypeptides leave the ribosome through a tunnel in the LSU and interact with protein factors that function in enzymatic processing, targeting, and the membrane insertion of nascent chains at the exit of the ribosomal tunnel. The sequence is that of Large ribosomal subunit protein eL34 from Candida albicans (strain SC5314 / ATCC MYA-2876) (Yeast).